The chain runs to 196 residues: Holliday junction branch migration complex subunit RuvA (196 aa).

The segment at 1 to 63 (MINKIYGKIV…DDDVKLFGFL (63 aa)) is domain I. Positions 64-142 (NISEREVFEN…KGDESSSYML (79 aa)) are domain II. A region of interest (flexible linker) is located at residue Lys-143. The segment at 143–196 (KFKELEQSIVNMGFDRKLVVVAFREIMLSDKFLILKEAEQEQFLFTETLKRLSV) is domain III.

Belongs to the RuvA family. As to quaternary structure, homotetramer. Forms an RuvA(8)-RuvB(12)-Holliday junction (HJ) complex. HJ DNA is sandwiched between 2 RuvA tetramers; dsDNA enters through RuvA and exits via RuvB. An RuvB hexamer assembles on each DNA strand where it exits the tetramer. Each RuvB hexamer is contacted by two RuvA subunits (via domain III) on 2 adjacent RuvB subunits; this complex drives branch migration. In the full resolvosome a probable DNA-RuvA(4)-RuvB(12)-RuvC(2) complex forms which resolves the HJ.

It is found in the cytoplasm. Functionally, the RuvA-RuvB-RuvC complex processes Holliday junction (HJ) DNA during genetic recombination and DNA repair, while the RuvA-RuvB complex plays an important role in the rescue of blocked DNA replication forks via replication fork reversal (RFR). RuvA specifically binds to HJ cruciform DNA, conferring on it an open structure. The RuvB hexamer acts as an ATP-dependent pump, pulling dsDNA into and through the RuvAB complex. HJ branch migration allows RuvC to scan DNA until it finds its consensus sequence, where it cleaves and resolves the cruciform DNA. The polypeptide is Holliday junction branch migration complex subunit RuvA (Borrelia recurrentis (strain A1)).